The chain runs to 678 residues: UvrABC system protein C (678 aa).

The span at 1 to 13 shows a compositional bias: basic residues; it reads MKKNISYGKHKTF. Residues 1-25 form a disordered region; that stretch reads MKKNISYGKHKTFPSKLNGLEKQHS. Residues 69 to 147 form the GIY-YIG domain; sequence HKPGVYRMFD…IKRLHPRFNV (79 aa). One can recognise a UVR domain in the interval 257 to 292; that stretch reads QSVKNDMIQAMHKAAEDLDFEQAAVYRDRLSALSHI.

This sequence belongs to the UvrC family. In terms of assembly, interacts with UvrB in an incision complex.

It is found in the cytoplasm. Its function is as follows. The UvrABC repair system catalyzes the recognition and processing of DNA lesions. UvrC both incises the 5' and 3' sides of the lesion. The N-terminal half is responsible for the 3' incision and the C-terminal half is responsible for the 5' incision. This Bartonella quintana (strain Toulouse) (Rochalimaea quintana) protein is UvrABC system protein C.